Reading from the N-terminus, the 432-residue chain is Serine hydroxymethyltransferase (432 aa).

Residues Leu-127 and 131-133 each bind (6S)-5,6,7,8-tetrahydrofolate; that span reads GHL. Lys-236 carries the N6-(pyridoxal phosphate)lysine modification.

It belongs to the SHMT family. In terms of assembly, homodimer. It depends on pyridoxal 5'-phosphate as a cofactor.

The protein resides in the cytoplasm. It carries out the reaction (6R)-5,10-methylene-5,6,7,8-tetrahydrofolate + glycine + H2O = (6S)-5,6,7,8-tetrahydrofolate + L-serine. It functions in the pathway one-carbon metabolism; tetrahydrofolate interconversion. It participates in amino-acid biosynthesis; glycine biosynthesis; glycine from L-serine: step 1/1. Catalyzes the reversible interconversion of serine and glycine with tetrahydrofolate (THF) serving as the one-carbon carrier. This reaction serves as the major source of one-carbon groups required for the biosynthesis of purines, thymidylate, methionine, and other important biomolecules. Also exhibits THF-independent aldolase activity toward beta-hydroxyamino acids, producing glycine and aldehydes, via a retro-aldol mechanism. This is Serine hydroxymethyltransferase from Rhizobium johnstonii (strain DSM 114642 / LMG 32736 / 3841) (Rhizobium leguminosarum bv. viciae).